Here is a 1062-residue protein sequence, read N- to C-terminus: Inactive tyrosine-protein kinase 7 (1062 aa).

A signal peptide spans methionine 1–alanine 22. Ig-like C2-type domains are found at residues alanine 23 to asparagine 112, proline 120 to serine 210, alanine 217 to leucine 309, proline 301 to threonine 399, proline 404 to glutamine 489, lysine 495 to leucine 578, and glycine 570 to leucine 672. Topologically, residues alanine 23 to threonine 696 are extracellular. Residues cysteine 45 and cysteine 93 are joined by a disulfide bond. 6 N-linked (GlcNAc...) asparagine glycosylation sites follow: asparagine 98, asparagine 108, asparagine 176, asparagine 206, asparagine 260, and asparagine 275. Cysteine 142 and cysteine 192 are disulfide-bonded. Intrachain disulfides connect cysteine 238–cysteine 293 and cysteine 335–cysteine 383. N-linked (GlcNAc...) asparagine glycans are attached at residues asparagine 397, asparagine 455, asparagine 559, and asparagine 638. 3 disulfides stabilise this stretch: cysteine 425-cysteine 473, cysteine 516-cysteine 562, and cysteine 605-cysteine 656. A helical transmembrane segment spans residues isoleucine 697–tyrosine 717. Residues cysteine 718–glutamine 1062 are Cytoplasmic-facing. Disordered stretches follow at residues glutamine 728–glutamine 750 and asparagine 1039–glutamine 1062. Residues alanine 786 to glutamine 1062 are interaction with CTNNB1. A Protein kinase; inactive domain is found at leucine 788–alanine 1058. Serine 1056 is modified (phosphoserine).

The protein belongs to the protein kinase superfamily. Tyr protein kinase family. Insulin receptor subfamily. As to quaternary structure, interacts with CTNNB1. In terms of processing, MMP14 cleaves PTK7 between Pro-613 and Leu-614 generating an N-terminal soluble (70 kDa) fragment and a membrane C-terminal (50 kDa) fragment. Proteolysis by MMP14 regulates PTK7 function in non-canonical Wnt signaling pathway. As to expression, expressed at high levels in lung and un-pregnant uterus among adult tissues, and in the tail, limbs, somites, gut and craniofacial regions among embryonic tissues.

It is found in the membrane. The protein localises to the cell junction. In terms of biological role, inactive tyrosine kinase involved in Wnt signaling pathway. Component of both the non-canonical (also known as the Wnt/planar cell polarity signaling) and the canonical Wnt signaling pathway. Functions in cell adhesion, cell migration, cell polarity, proliferation, actin cytoskeleton reorganization and apoptosis. Has a role in embryogenesis, epithelial tissue organization and angiogenesis. The polypeptide is Inactive tyrosine-protein kinase 7 (Ptk7) (Mus musculus (Mouse)).